Consider the following 508-residue polypeptide: Bifunctional purine biosynthesis protein PurH (508 aa).

Residues 1-145 (MTKRALISVS…KNHQYVTVIV (145 aa)) form the MGS-like domain.

The protein belongs to the PurH family.

It carries out the reaction (6R)-10-formyltetrahydrofolate + 5-amino-1-(5-phospho-beta-D-ribosyl)imidazole-4-carboxamide = 5-formamido-1-(5-phospho-D-ribosyl)imidazole-4-carboxamide + (6S)-5,6,7,8-tetrahydrofolate. The enzyme catalyses IMP + H2O = 5-formamido-1-(5-phospho-D-ribosyl)imidazole-4-carboxamide. It participates in purine metabolism; IMP biosynthesis via de novo pathway; 5-formamido-1-(5-phospho-D-ribosyl)imidazole-4-carboxamide from 5-amino-1-(5-phospho-D-ribosyl)imidazole-4-carboxamide (10-formyl THF route): step 1/1. It functions in the pathway purine metabolism; IMP biosynthesis via de novo pathway; IMP from 5-formamido-1-(5-phospho-D-ribosyl)imidazole-4-carboxamide: step 1/1. In Lysinibacillus sphaericus (strain C3-41), this protein is Bifunctional purine biosynthesis protein PurH.